Reading from the N-terminus, the 331-residue chain is Calcium-binding and coiled-coil domain-containing protein 2 (331 aa).

A CLIR motif is present at residues 128-131; the sequence is IMVV. The stretch at 132–309 forms a coiled coil; it reads INKEKVEEME…EKASWEKEKA (178 aa). Residues 189–310 form a disordered region; that stretch reads KASWEKEKAS…KASWEKEKAP (122 aa). An LIR-like motif is present at residues 190-193; sequence ASWE. The tract at residues 292-302 is interaction with LGALS8; it reads KEKASWEEEKA.

The protein belongs to the CALCOCO family. Dimer. Part of a complex consisting of CALCOCO2, TAX1BP1 and MYO6. Interacts with MYO6. Interacts with GEMIN4. Interacts with ATG8 family members MAP1LC3A, MAP1LC3B, GABARAP, GABARAPL1 and GABARAPL2. Interacts with ATG8 family member MAP1LC3C. Interacts with LGALS8. Interacts with TOM1; the interaction is indirect and is mediated by MYO6, which acts as a bridge between TOM1 and CALCOCO2. Interacts with AZI2.

It is found in the cytoplasm. The protein resides in the perinuclear region. It localises to the cytoskeleton. The protein localises to the cytoplasmic vesicle. Its subcellular location is the autophagosome membrane. Its function is as follows. Xenophagy-specific receptor required for autophagy-mediated intracellular bacteria degradation. Acts as an effector protein of galectin-sensed membrane damage that restricts the proliferation of infecting pathogens upon entry into the cytosol by targeting LGALS8-associated bacteria for autophagy. Initially orchestrates bacteria targeting to autophagosomes and subsequently ensures pathogen degradation by regulating pathogen-containing autophagosome maturation. Bacteria targeting to autophagosomes relies on its interaction with MAP1LC3A, MAP1LC3B and/or GABARAPL2, whereas regulation of pathogen-containing autophagosome maturation requires the interaction with MAP3LC3C. May play a role in ruffle formation and actin cytoskeleton organization and seems to negatively regulate constitutive secretion. This chain is Calcium-binding and coiled-coil domain-containing protein 2, found in Mus musculus (Mouse).